Reading from the N-terminus, the 496-residue chain is Catalase isozyme 3 (496 aa).

Positions 1–25 are disordered; that stretch reads MTMDPTKFRPSSSHDTTVTTTNAGA. A compositionally biased stretch (polar residues) spans 9 to 23; sequence RPSSSHDTTVTTTNA. Residues H67 and N140 contribute to the active site. Residue Y351 coordinates heme. The disordered stretch occupies residues 402-422; sequence PLRQAAPPTPLPPRPVAGRRE.

The protein belongs to the catalase family. Homotetramer. The cofactor is heme. As to expression, leaf mesophyll cells, pericarp, seedling roots and the coleoptile.

It is found in the mitochondrion. The catalysed reaction is 2 H2O2 = O2 + 2 H2O. Occurs in almost all aerobically respiring organisms and serves to protect cells from the toxic effects of hydrogen peroxide. Its levels are highest in the light period and are lowest in the dark period, hence it may be important for scavenging hydrogen peroxide at night, rather than during the day. In Zea mays (Maize), this protein is Catalase isozyme 3 (CAT3).